Reading from the N-terminus, the 412-residue chain is Argininosuccinate synthase (412 aa).

ATP is bound by residues 10–18 and Ala36; that span reads AYSGGLDTS. Residues Tyr87 and Ser92 each coordinate L-citrulline. Tyr87 carries the phosphotyrosine modification. Lys112 is modified (N6-acetyllysine). Tyr113 carries the phosphotyrosine modification. 115-123 is an ATP binding site; sequence SHGATGKGN. 3 residues coordinate L-aspartate: Thr119, Asn123, and Asp124. An L-citrulline-binding site is contributed by Asn123. Arg127 provides a ligand contact to L-citrulline. Lys165 and Lys176 each carry N6-acetyllysine; by CLOCK. L-citrulline contacts are provided by Ser180 and Ser189. Ser180 bears the Phosphoserine mark. Thr219 is modified (phosphothreonine). Residues Glu270 and Tyr282 each coordinate L-citrulline.

This sequence belongs to the argininosuccinate synthase family. Type 1 subfamily. As to quaternary structure, homotetramer. Interacts with NMRAL1. Interacts with CLOCK; in a circadian manner. Forms tissue-specific complexes with ASL, SLC7A1, HSP90AA1 and nitric oxide synthase NOS1, NOS2 or NOS3; the complex regulates cell-autonomous L-arginine synthesis and citrulline recycling while channeling extracellular L-arginine to nitric oxide synthesis pathway. Acetylated by CLOCK in a circadian manner which negatively regulates its enzyme activity. Deacetylated by histone deacetylases. Expressed in adult liver.

It is found in the cytoplasm. The protein resides in the cytosol. It carries out the reaction L-citrulline + L-aspartate + ATP = 2-(N(omega)-L-arginino)succinate + AMP + diphosphate + H(+). The protein operates within amino-acid biosynthesis; L-arginine biosynthesis; L-arginine from L-ornithine and carbamoyl phosphate: step 2/3. It participates in nitrogen metabolism; urea cycle; (N(omega)-L-arginino)succinate from L-aspartate and L-citrulline: step 1/1. Its function is as follows. One of the enzymes of the urea cycle, the metabolic pathway transforming neurotoxic amonia produced by protein catabolism into inocuous urea in the liver of ureotelic animals. Catalyzes the formation of arginosuccinate from aspartate, citrulline and ATP and together with ASL it is responsible for the biosynthesis of arginine in most body tissues. The protein is Argininosuccinate synthase of Homo sapiens (Human).